Reading from the N-terminus, the 184-residue chain is Major urinary protein 3 (184 aa).

The N-terminal stretch at 1 to 22 (MKLLLPLLLLLCLELTLVCIHA) is a signal peptide. An N-linked (GlcNAc...) asparagine glycan is attached at Asn-66. An intrachain disulfide couples Cys-86 to Cys-179.

Belongs to the calycin superfamily. Lipocalin family. Post-translationally, glycosylated. In terms of tissue distribution, abundant in the urine of adult male mice but absent from that of females.

It is found in the secreted. Its function is as follows. Binds pheromones that are released from drying urine of males. These pheromones affect the sexual behavior of females. In Mus musculus (Mouse), this protein is Major urinary protein 3 (Mup3).